An 812-amino-acid polypeptide reads, in one-letter code: Mitochondrial intermediate peptidase (812 aa).

The transit peptide at 1 to 29 (MRLSRQLLRSTPFLTRAKPVSGKVSHFRS) directs the protein to the mitochondrion. Positions 19 to 49 (PVSGKVSHFRSRTDLKGGSSNSSKSPDSVGD) are disordered. Positions 37–46 (SSNSSKSPDS) are enriched in low complexity. His-595 contributes to the Zn(2+) binding site. Residue Glu-596 is part of the active site. 2 residues coordinate Zn(2+): His-599 and His-602.

It belongs to the peptidase M3 family. Zn(2+) is required as a cofactor.

It is found in the mitochondrion matrix. It catalyses the reaction Release of an N-terminal octapeptide as second stage of processing of some proteins imported into the mitochondrion.. In terms of biological role, cleaves proteins, imported into the mitochondrion, to their mature size. While most mitochondrial precursor proteins are processed to the mature form in one step by mitochondrial processing peptidase (MPP), the sequential cleavage by MIP of an octapeptide after initial processing by MPP is a required step for a subgroup of nuclear-encoded precursor proteins destined for the matrix or the inner membrane. This is Mitochondrial intermediate peptidase (OCT1) from Scheffersomyces stipitis (strain ATCC 58785 / CBS 6054 / NBRC 10063 / NRRL Y-11545) (Yeast).